Consider the following 611-residue polypeptide: Dihydroxy-acid dehydratase (611 aa).

Position 81 (Asp81) interacts with Mg(2+). Residue Cys122 coordinates [2Fe-2S] cluster. 2 residues coordinate Mg(2+): Asp123 and Lys124. An N6-carboxylysine modification is found at Lys124. [2Fe-2S] cluster is bound at residue Cys195. Glu491 contributes to the Mg(2+) binding site. Ser517 functions as the Proton acceptor in the catalytic mechanism.

Belongs to the IlvD/Edd family. Homodimer. The cofactor is [2Fe-2S] cluster. Mg(2+) serves as cofactor.

It catalyses the reaction (2R)-2,3-dihydroxy-3-methylbutanoate = 3-methyl-2-oxobutanoate + H2O. The catalysed reaction is (2R,3R)-2,3-dihydroxy-3-methylpentanoate = (S)-3-methyl-2-oxopentanoate + H2O. It participates in amino-acid biosynthesis; L-isoleucine biosynthesis; L-isoleucine from 2-oxobutanoate: step 3/4. The protein operates within amino-acid biosynthesis; L-valine biosynthesis; L-valine from pyruvate: step 3/4. Functionally, functions in the biosynthesis of branched-chain amino acids. Catalyzes the dehydration of (2R,3R)-2,3-dihydroxy-3-methylpentanoate (2,3-dihydroxy-3-methylvalerate) into 2-oxo-3-methylpentanoate (2-oxo-3-methylvalerate) and of (2R)-2,3-dihydroxy-3-methylbutanoate (2,3-dihydroxyisovalerate) into 2-oxo-3-methylbutanoate (2-oxoisovalerate), the penultimate precursor to L-isoleucine and L-valine, respectively. The sequence is that of Dihydroxy-acid dehydratase from Glaesserella parasuis serovar 5 (strain SH0165) (Haemophilus parasuis).